A 947-amino-acid chain; its full sequence is MDAALGPPEQMAELEEDLTPMMAQYYELCRQYDDALVLFQVGDFYEAFCAAAKRVARLCEITLTQREDSTGEYPMAGIPIDNAESYVETLLDAGYRVAIADQVEDPDEVSGVVERAVTRIVTPGTLTESELLGGADNNYVAALTAGERYGLALLDISTGDCYATSVGSESAVADELSRFGPAEAIVGPDVDVDRDAVFGPACLVTRYDADAFAQDRAEDRVGQYFGPPERLLAGGAEIRACGGLLAYAEYTRGSSGAVGPDGEPVDPDVDPAGTLDYLNHLTRYDPREYMLLDAVAVESLELFKRRSVRGHENRTLVDTVDETACALGRRKLTDWLRRPLLDADRIEARHGAVAELQRDPATREELSALLAEVYDLERLISRVSRGRANARDLRSLAATLSVVPDIRDHLADADARLLADLHATLDPLAETREEIEAAIRPDPPQQVTEGGVIREGYDEELDRLRSTEQSGKEWIDELEASERERTGIDSLKVGHTSVHGYYIEVTNANLDAVPEDYQRRQTLKNSERYYTPALKEREDEILRAESAADDLEYDLFCAVRDEVADEAERVQALADRLARLDVLVSFAEVAAQYDYCRPTVGSDGIDVTAGRHPVVERTEDAFIPNDTHLGSGPVPASRDGSDDGVTADDIQPFLAVVTGPNMSGKSTYMRQVALICLLAQSGSFVPAKAADLPILDRVFTRVGASDDIAGGRSTFMIEMTELATILDAATENSLVLLDEVGRGTSTADGLAIARAVTEYLHDEVGAYTLFATHHHDLTAVAAALSGATNRHFETSREDGDVRFDHELAPGPAAASYGVEVASMAGVPDSVVERSRDLLADAETADTGVEATRETEVASEPRPGTRADSETDSTATETTGPTENGAASAPAGEATSDDHAQEVFQTNGAAAEDELPESVAQQLASLDVATMTPIEAMNALADLQDRIE.

Residues 623–643 form a disordered region; it reads IPNDTHLGSGPVPASRDGSDD. An ATP-binding site is contributed by 659 to 666; it reads GPNMSGKS. The tract at residues 841 to 916 is disordered; the sequence is AETADTGVEA…GAAAEDELPE (76 aa).

Belongs to the DNA mismatch repair MutS family.

Its function is as follows. This protein is involved in the repair of mismatches in DNA. It is possible that it carries out the mismatch recognition step. This protein has a weak ATPase activity. In Haloarcula marismortui (strain ATCC 43049 / DSM 3752 / JCM 8966 / VKM B-1809) (Halobacterium marismortui), this protein is DNA mismatch repair protein MutS 2.